A 189-amino-acid polypeptide reads, in one-letter code: Potassium-transporting ATPase KdpC subunit (189 aa).

Residues 6-26 form a helical membrane-spanning segment; sequence PAIMMVLVFTIICGGIYPAVV.

The protein belongs to the KdpC family. In terms of assembly, the system is composed of three essential subunits: KdpA, KdpB and KdpC.

It is found in the cell inner membrane. Functionally, part of the high-affinity ATP-driven potassium transport (or Kdp) system, which catalyzes the hydrolysis of ATP coupled with the electrogenic transport of potassium into the cytoplasm. This subunit acts as a catalytic chaperone that increases the ATP-binding affinity of the ATP-hydrolyzing subunit KdpB by the formation of a transient KdpB/KdpC/ATP ternary complex. This chain is Potassium-transporting ATPase KdpC subunit, found in Geobacter metallireducens (strain ATCC 53774 / DSM 7210 / GS-15).